We begin with the raw amino-acid sequence, 85 residues long: Beta-insect depressant toxin Lqh-dprIT3d (85 aa).

The first 21 residues, Met-1–Ala-21, serve as a signal peptide directing secretion. An LCN-type CS-alpha/beta domain is found at Asp-22 to Gly-82. Disulfide bonds link Cys-31–Cys-81, Cys-35–Cys-56, Cys-42–Cys-63, and Cys-46–Cys-65. Gly-82 carries the post-translational modification Glycine amide.

Belongs to the long (4 C-C) scorpion toxin superfamily. Sodium channel inhibitor family. Beta subfamily. In terms of tissue distribution, expressed by the venom gland.

Its subcellular location is the secreted. Its function is as follows. Depressant insect beta-toxins cause a transient contraction paralysis followed by a slow flaccid paralysis. They bind voltage-independently at site-4 of sodium channels (Nav) and block action potentials, primarily by depolarizing the axonal membrane and suppressing the sodium current. This depressant toxin is active only on insects. It is found in a relatively small amount in the venom, and its activity on insects is 10-fold higher compared to other known depressant toxins. This chain is Beta-insect depressant toxin Lqh-dprIT3d, found in Leiurus hebraeus (Hebrew deathstalker scorpion).